Reading from the N-terminus, the 130-residue chain is Lysozyme C (130 aa).

The C-type lysozyme domain occupies 1-130; the sequence is KTYERCELAR…VSPWIRDCGL (130 aa). Disulfide bonds link Cys6/Cys128, Cys30/Cys116, Cys65/Cys81, and Cys77/Cys95. Residues Glu35 and Asp53 contribute to the active site.

Belongs to the glycosyl hydrolase 22 family. As to quaternary structure, monomer.

It localises to the secreted. It carries out the reaction Hydrolysis of (1-&gt;4)-beta-linkages between N-acetylmuramic acid and N-acetyl-D-glucosamine residues in a peptidoglycan and between N-acetyl-D-glucosamine residues in chitodextrins.. Its function is as follows. Lysozymes have primarily a bacteriolytic function; those in tissues and body fluids are associated with the monocyte-macrophage system and enhance the activity of immunoagents. The protein is Lysozyme C (LYZ) of Chelonia mydas (Green sea-turtle).